The chain runs to 397 residues: P2X purinoceptor 3 (397 aa).

At 1 to 20 (MNCISDFFTYETTKSVVVKS) the chain is on the cytoplasmic side. A helical membrane pass occupies residues 21–43 (WTIGIINRAVQLLIISYFVGWVF). The Extracellular portion of the chain corresponds to 44–322 (LHEKAYQVRD…AGKFNIIPTI (279 aa)). ATP-binding residues include K63 and K65. Disulfide bonds link C107/C153, C116/C137, and C122/C147. E111 contacts Mg(2+). N-linked (GlcNAc...) asparagine glycosylation occurs at N139. D158 provides a ligand contact to Mg(2+). D158 contacts Ca(2+). N-linked (GlcNAc...) asparagine glycosylation is present at N170. T172 serves as a coordination point for ATP. A glycan (N-linked (GlcNAc...) asparagine) is linked at N194. 2 cysteine pairs are disulfide-bonded: C203-C213 and C247-C256. Residues S275, N279, and R281 each contribute to the ATP site. N290 carries an N-linked (GlcNAc...) asparagine glycan. Residue K299 coordinates ATP. Residues 323–341 (ISSVAAFTSVGVGTVLCDI) form a helical membrane-spanning segment. Residues 342–397 (ILLNFLKGADHYKARKFEEVTETTLKGTASTNPVFTSDQATVEKQSTDSGAYSIGH) lie on the Cytoplasmic side of the membrane.

Belongs to the P2X receptor family. In terms of assembly, homotrimer. Forms heterotrimer with P2RX2. Heterotrimeric P2RX2/3 has a ligand dose-response profile that is distinct from either homotrimeric P2RX2 or P2RX3.

It is found in the cell membrane. The catalysed reaction is Ca(2+)(in) = Ca(2+)(out). The enzyme catalyses Na(+)(in) = Na(+)(out). Its activity is regulated as follows. Has high sensitivity to ATP. Fast activation by external ATP. Exhibits rapid desensitization. Sensitives to the ATP agonist:alpha/beta-methylene-ATP. Subject to allosteric inhibition by AF-219. Mg(2+) and Ca(2+) slow deactivation of P2RX3. Extracellular ATP-activated non-selective cation channel. Plays particularly important role in sensory neurons where its activation is critical for gustatory, nociceptive responses, visceral reflexes and sensory hypersensitization. The polypeptide is P2X purinoceptor 3 (P2rx3) (Mus musculus (Mouse)).